Consider the following 114-residue polypeptide: Putative cysteine proteinase inhibitor 9 (114 aa).

An N-terminal signal peptide occupies residues 1 to 23; it reads MRTSSLVLFAAVAVFGAACTAAA.

This sequence belongs to the cystatin family. Phytocystatin subfamily.

The protein resides in the secreted. Functionally, specific inhibitor of cysteine proteinases. Probably involved in the regulation of endogenous processes and in defense against pests and pathogens. The protein is Putative cysteine proteinase inhibitor 9 of Oryza sativa subsp. japonica (Rice).